A 150-amino-acid chain; its full sequence is Large ribosomal subunit protein uL15 (150 aa).

Residues 12–43 (AKKRKKRVGCGESSGHGKTSGRGHKGQKARAG) are disordered. A compositionally biased stretch (basic residues) spans 30–39 (TSGRGHKGQK).

Belongs to the universal ribosomal protein uL15 family. Part of the 50S ribosomal subunit.

Its function is as follows. Binds to the 23S rRNA. This chain is Large ribosomal subunit protein uL15, found in Methylacidiphilum infernorum (isolate V4) (Methylokorus infernorum (strain V4)).